The following is a 366-amino-acid chain: GTPase Obg (366 aa).

Residues 1–162 form the Obg domain; the sequence is MRFVDEAVIK…KSLRLELKIL (162 aa). The segment at 125 to 150 is disordered; the sequence is RGGKGNEHFKSSTMQAPRFSQPGEPG. Residues 163-335 form the OBG-type G domain; that stretch reads ADAGLLGLPN…VVSEMWRMLA (173 aa). Residues 169-176, 194-198, 218-221, 288-291, and 316-318 each bind GTP; these read GLPNAGKS, FTTLV, DIPG, NKID, and SAL. S176 and T196 together coordinate Mg(2+).

Belongs to the TRAFAC class OBG-HflX-like GTPase superfamily. OBG GTPase family. Monomer. Mg(2+) is required as a cofactor.

The protein localises to the cytoplasm. An essential GTPase which binds GTP, GDP and possibly (p)ppGpp with moderate affinity, with high nucleotide exchange rates and a fairly low GTP hydrolysis rate. Plays a role in control of the cell cycle, stress response, ribosome biogenesis and in those bacteria that undergo differentiation, in morphogenesis control. The polypeptide is GTPase Obg (Oleidesulfovibrio alaskensis (strain ATCC BAA-1058 / DSM 17464 / G20) (Desulfovibrio alaskensis)).